Consider the following 78-residue polypeptide: Sec-independent protein translocase protein TatA (78 aa).

A helical transmembrane segment spans residues 1 to 21 (MGSLSIWHWIVVVAVILLLFG). Basic and acidic residues predominate over residues 43–55 (MKDDEKTAEKPEP). The interval 43 to 78 (MKDDEKTAEKPEPVKTINHNADGSGAARSDTGSKVI) is disordered.

The protein belongs to the TatA/E family. The Tat system comprises two distinct complexes: a TatABC complex, containing multiple copies of TatA, TatB and TatC subunits, and a separate TatA complex, containing only TatA subunits. Substrates initially bind to the TatABC complex, which probably triggers association of the separate TatA complex to form the active translocon.

It localises to the cell inner membrane. In terms of biological role, part of the twin-arginine translocation (Tat) system that transports large folded proteins containing a characteristic twin-arginine motif in their signal peptide across membranes. TatA could form the protein-conducting channel of the Tat system. The protein is Sec-independent protein translocase protein TatA of Nitrobacter winogradskyi (strain ATCC 25391 / DSM 10237 / CIP 104748 / NCIMB 11846 / Nb-255).